Consider the following 410-residue polypeptide: Gamma-glutamyl phosphate reductase (410 aa).

The protein belongs to the gamma-glutamyl phosphate reductase family.

It localises to the cytoplasm. The enzyme catalyses L-glutamate 5-semialdehyde + phosphate + NADP(+) = L-glutamyl 5-phosphate + NADPH + H(+). Its pathway is amino-acid biosynthesis; L-proline biosynthesis; L-glutamate 5-semialdehyde from L-glutamate: step 2/2. In terms of biological role, catalyzes the NADPH-dependent reduction of L-glutamate 5-phosphate into L-glutamate 5-semialdehyde and phosphate. The product spontaneously undergoes cyclization to form 1-pyrroline-5-carboxylate. The protein is Gamma-glutamyl phosphate reductase of Campylobacter jejuni subsp. jejuni serotype O:23/36 (strain 81-176).